The following is a 499-amino-acid chain: Centrosomal protein of 57 kDa (499 aa).

The span at 1-16 (MAAASVSAASDSQFSS) shows a compositional bias: low complexity. The interval 1 to 41 (MAAASVSAASDSQFSSVLAEPSRSNGNMVHHSSSPYVLYPP) is disordered. Residues 22-35 (SRSNGNMVHHSSSP) show a composition bias toward polar residues. At Ser53 the chain carries Phosphoserine. The tract at residues 58–239 (TFAYPESNSR…RAAELQSGIE (182 aa)) is centrosome localization domain (CLD). A coiled-coil region spans residues 63 to 242 (ESNSRAIFSA…ELQSGIEANR (180 aa)). Disordered regions lie at residues 255–275 (TSTR…GFRN) and 424–476 (LEKQ…SRKN). Residues 278-490 (GAQPHYRLCL…KDMQTLQNSL (213 aa)) are mediates interaction with microtubules. The stretch at 388–491 (PSEELKDNLE…DMQTLQNSLQ (104 aa)) forms a coiled coil. A compositionally biased stretch (basic and acidic residues) spans 427-443 (QSTDKQKELKGNKKTLD). Over residues 448-458 (SSSRSSVITRT) the composition is skewed to low complexity. Residues 460-474 (SKKDFTKQRPGEKSR) show a composition bias toward basic and acidic residues.

This sequence belongs to the translokin family. As to quaternary structure, homodimer and homooligomer. Interacts with FGF2 and RAP80. Does not interact with FGF1 or FGF2 isoform 24 kDa. Interacts with microtubules. In terms of tissue distribution, ubiquitous (at protein level).

The protein localises to the nucleus. It localises to the cytoplasm. The protein resides in the cytoskeleton. It is found in the microtubule organizing center. Its subcellular location is the centrosome. Functionally, centrosomal protein which may be required for microtubule attachment to centrosomes. May act by forming ring-like structures around microtubules. Mediates nuclear translocation and mitogenic activity of the internalized growth factor FGF2. This chain is Centrosomal protein of 57 kDa (Cep57), found in Rattus norvegicus (Rat).